The chain runs to 145 residues: MPLTRLAKLFADNLVHTSPQVIADHPGWLFAQRCEAWWKGQLDEDPVSVLLVYRSPRVKDTSRLYRPVSNLILSANKVEYVARGTRFDPTMIHCDKGTEWMVLRMTQADQFPKDPIDMSEVAKLLSVAVDGALNETIGKGRMAAA.

The polypeptide is Gene 70 protein (70) (Mycobacterium (Mycobacteriophage L5)).